We begin with the raw amino-acid sequence, 244 residues long: CTD nuclear envelope phosphatase 1 (244 aa).

A helical membrane pass occupies residues 7-29 (LLGLRGFVAFAAKLWSFVLYLLR). One can recognise an FCP1 homology domain in the interval 57-224 (SQVKRKVLVL…LNLLPMLDAL (168 aa)).

It belongs to the dullard family. Interacts with bmpr1a, bmpr1b and bmpr2.

The protein resides in the membrane. The protein localises to the cytoplasm. It is found in the perinuclear region. The enzyme catalyses O-phospho-L-seryl-[protein] + H2O = L-seryl-[protein] + phosphate. The catalysed reaction is O-phospho-L-threonyl-[protein] + H2O = L-threonyl-[protein] + phosphate. Its function is as follows. Serine/threonine protein phosphatase that may dephosphorylate and activate lipins. Lipins are phosphatidate phosphatases that catalyze the conversion of phosphatidic acid to diacylglycerol and control the metabolism of fatty acids at different levels. May indirectly modulate the lipid composition of nuclear and/or endoplasmic reticulum membranes and be required for proper nuclear membrane morphology and/or dynamics. May also indirectly regulate the production of lipid droplets and triacylglycerol. Induces neuronal differentiation by antagonizing BMP signaling. Acts both by dephosphorylating BMPR1A and by promoting BMPR2 proteasomal degradation. The chain is CTD nuclear envelope phosphatase 1 (ctdnep1) from Xenopus tropicalis (Western clawed frog).